A 321-amino-acid polypeptide reads, in one-letter code: MSAGISHVPAAQVSQHVTVLLEEAVEALSIKPDGVYVDGTFGRGGHSRKILEKLGAQGRLVALDRDLAAIQAAQGIQDARFKIVHSHFAAMAQVLASLNIQQVDGVLLDLGISSPQIDEGERGFSFRFDGPLDMRMDQSRGQTAAEFIATATEQELTRVIKEYGEERFAKQIARAIVAQRAGGMDISTTGQLAKIVAGAVPKVEPGQDPATRTFQALRIFINQELEELSLTLPQCLSLLAPQGRLAVISFHSLEDRIVKRFIRGEQDRDNLPAHFPVRASDLPQPRLVAIGRAVRPSEDEVRRNPRSRSAVLRVAERTAVL.

Residues 44–46 (GGH), aspartate 64, phenylalanine 88, aspartate 109, and glutamine 116 contribute to the S-adenosyl-L-methionine site.

This sequence belongs to the methyltransferase superfamily. RsmH family.

Its subcellular location is the cytoplasm. The catalysed reaction is cytidine(1402) in 16S rRNA + S-adenosyl-L-methionine = N(4)-methylcytidine(1402) in 16S rRNA + S-adenosyl-L-homocysteine + H(+). Functionally, specifically methylates the N4 position of cytidine in position 1402 (C1402) of 16S rRNA. This chain is Ribosomal RNA small subunit methyltransferase H, found in Methylobacillus flagellatus (strain ATCC 51484 / DSM 6875 / VKM B-1610 / KT).